The following is a 607-amino-acid chain: Arginine--tRNA ligase (607 aa).

The short motif at 147–157 is the 'HIGH' region element; sequence PNIAKEMHVGH.

Belongs to the class-I aminoacyl-tRNA synthetase family. As to quaternary structure, monomer.

The protein resides in the cytoplasm. The catalysed reaction is tRNA(Arg) + L-arginine + ATP = L-arginyl-tRNA(Arg) + AMP + diphosphate. This is Arginine--tRNA ligase from Prochlorococcus marinus (strain NATL2A).